The primary structure comprises 234 residues: DNA repair protein RecO (234 aa).

This sequence belongs to the RecO family.

Its function is as follows. Involved in DNA repair and RecF pathway recombination. The polypeptide is DNA repair protein RecO (Halorhodospira halophila (strain DSM 244 / SL1) (Ectothiorhodospira halophila (strain DSM 244 / SL1))).